We begin with the raw amino-acid sequence, 95 residues long: Aspartyl/glutamyl-tRNA(Asn/Gln) amidotransferase subunit C (95 aa).

The protein belongs to the GatC family. As to quaternary structure, heterotrimer of A, B and C subunits.

It carries out the reaction L-glutamyl-tRNA(Gln) + L-glutamine + ATP + H2O = L-glutaminyl-tRNA(Gln) + L-glutamate + ADP + phosphate + H(+). The catalysed reaction is L-aspartyl-tRNA(Asn) + L-glutamine + ATP + H2O = L-asparaginyl-tRNA(Asn) + L-glutamate + ADP + phosphate + 2 H(+). Functionally, allows the formation of correctly charged Asn-tRNA(Asn) or Gln-tRNA(Gln) through the transamidation of misacylated Asp-tRNA(Asn) or Glu-tRNA(Gln) in organisms which lack either or both of asparaginyl-tRNA or glutaminyl-tRNA synthetases. The reaction takes place in the presence of glutamine and ATP through an activated phospho-Asp-tRNA(Asn) or phospho-Glu-tRNA(Gln). The protein is Aspartyl/glutamyl-tRNA(Asn/Gln) amidotransferase subunit C of Methylobacterium radiotolerans (strain ATCC 27329 / DSM 1819 / JCM 2831 / NBRC 15690 / NCIMB 10815 / 0-1).